We begin with the raw amino-acid sequence, 356 residues long: Dihydroorotate dehydrogenase (quinone) (356 aa).

Residues 68–72 (AGFDK) and threonine 92 each bind FMN. Substrate is bound at residue lysine 72. Residue 117–121 (NRMGF) coordinates substrate. The FMN site is built by asparagine 145 and asparagine 178. Asparagine 178 contacts substrate. The active-site Nucleophile is serine 181. Substrate is bound at residue asparagine 183. FMN-binding residues include lysine 214 and threonine 242. A substrate-binding site is contributed by 243-244 (NT). FMN-binding positions include glycine 266, glycine 295, and 316-317 (YT).

It belongs to the dihydroorotate dehydrogenase family. Type 2 subfamily. As to quaternary structure, monomer. The cofactor is FMN.

It localises to the cell membrane. The catalysed reaction is (S)-dihydroorotate + a quinone = orotate + a quinol. The protein operates within pyrimidine metabolism; UMP biosynthesis via de novo pathway; orotate from (S)-dihydroorotate (quinone route): step 1/1. Functionally, catalyzes the conversion of dihydroorotate to orotate with quinone as electron acceptor. This is Dihydroorotate dehydrogenase (quinone) from Mycobacterium sp. (strain KMS).